The following is a 400-amino-acid chain: MIANGFESMDKERVRKRPRMTWDEAPAEPEAKRAVIKGHGSDGRILSPPLRDDDRDGHYVFSLRDNLTPRYKILSKMGEGTFGRVLECWDRDTKEYVAIKIIRSIKKYRDAAMIEIDVLQKLVKSDKGRTRCVQMKNWFDYRNHICIVFEKLGPSLFDFLKRNKYSAFPLALVRDFGCQLLESVAYMHELQLVHTDLKPENILLVSSENVKLPDNKRSAANETHFRCLPKSSAIKLIDFGSTVCDNRIHHSIVQTRHYRSPEVILGLGWSYQCDLWSIGCILFELCTGEALFQTHDNLEHLAMMERALGPLPEHMTRKASRGAEKYFRRGCRLNWPEGANSRESIRAVKRLDRLKDMVSKHVDNTRSRFADLLYGLLAYDPSERLTANEALDHPFFKSSS.

Positions 1-29 are disordered; sequence MIANGFESMDKERVRKRPRMTWDEAPAEP. The 326-residue stretch at 71–396 folds into the Protein kinase domain; the sequence is YKILSKMGEG…ANEALDHPFF (326 aa). ATP contacts are provided by residues 77–85 and lysine 100; that span reads MGEGTFGRV. The Proton acceptor role is filled by aspartate 196.

Belongs to the protein kinase superfamily. CMGC Ser/Thr protein kinase family. Lammer subfamily.

The enzyme catalyses L-seryl-[protein] + ATP = O-phospho-L-seryl-[protein] + ADP + H(+). The catalysed reaction is L-threonyl-[protein] + ATP = O-phospho-L-threonyl-[protein] + ADP + H(+). It catalyses the reaction L-tyrosyl-[protein] + ATP = O-phospho-L-tyrosyl-[protein] + ADP + H(+). In Arabidopsis thaliana (Mouse-ear cress), this protein is Serine/threonine-protein kinase AFC3 (AFC3).